The sequence spans 89 residues: Dynein light chain 1, cytoplasmic (89 aa).

It belongs to the dynein light chain family. Interacts with mett-10; the interaction is direct, and is required for the nuclear localization of mett-10. Component of a dynein-regulating complex composed of at least bicd-1, dlc-1 and egal-1. Interacts with egal-1 and unc-83. Interacts with fbf-2. Broadly expressed in tissues including the intestine, body wall muscles, germs cells, oocytes, the rectal valve and cells in the head.

It localises to the cytoplasm. It is found in the cytoskeleton. The protein resides in the nucleus envelope. The protein localises to the cytoplasmic granule. In terms of biological role, acts as a non-catalytic accessory component of a dynein complex. Part of a complex with bicd-1 and egal-1, which is recruited to the nuclear envelope by unc-83, where in turn, it recruits dynein to the nuclear surface and regulates nuclear migrations in hypodermal precursor cells. Probably within a dynein motor complex, plays a role in the cell fate specification of the germline and oogenesis. In particular, it inhibits germ cell proliferation. Regulates the function and localization of the RNA-binding protein fbf-2 in the germline. Plays a role in mitotic and meiotic processes. Involved in the pairing of homologous chromosomes. Independently of its dynein-mediated functions, plays a role in germ cell apoptosis. The chain is Dynein light chain 1, cytoplasmic from Caenorhabditis elegans.